Here is a 274-residue protein sequence, read N- to C-terminus: Thiamine kinase (274 aa).

This sequence belongs to the thiamine kinase family.

The enzyme catalyses thiamine + ATP = thiamine phosphate + ADP + H(+). Its pathway is cofactor biosynthesis; thiamine diphosphate biosynthesis; thiamine phosphate from thiamine: step 1/1. Its function is as follows. Catalyzes the ATP-dependent phosphorylation of thiamine to thiamine phosphate. Is involved in thiamine salvage. In Shigella dysenteriae serotype 1 (strain Sd197), this protein is Thiamine kinase.